A 403-amino-acid polypeptide reads, in one-letter code: Coenzyme A biosynthesis bifunctional protein CoaBC (403 aa).

The interval 1 to 197 is phosphopantothenoylcysteine decarboxylase; that stretch reads MISEIMHPTK…GNNLKKEGNR (197 aa). The tract at residues 198 to 403 is phosphopantothenate--cysteine ligase; that stretch reads VLILNGGTVE…VEKVKKLVKS (206 aa). CTP contacts are provided by Asp285, Lys294, and Phe327.

This sequence in the N-terminal section; belongs to the HFCD (homo-oligomeric flavin containing Cys decarboxylase) superfamily. It in the C-terminal section; belongs to the PPC synthetase family. In terms of assembly, homododecamer. The CoaC domain is responsible for dodecamer formation. It depends on Mg(2+) as a cofactor. Requires FMN as cofactor.

The enzyme catalyses N-[(R)-4-phosphopantothenoyl]-L-cysteine + H(+) = (R)-4'-phosphopantetheine + CO2. It carries out the reaction (R)-4'-phosphopantothenate + L-cysteine + CTP = N-[(R)-4-phosphopantothenoyl]-L-cysteine + CMP + diphosphate + H(+). Its pathway is cofactor biosynthesis; coenzyme A biosynthesis. Catalyzes two sequential steps in the biosynthesis of coenzyme A. In the first step cysteine is conjugated to 4'-phosphopantothenate to form 4-phosphopantothenoylcysteine. In the second step the latter compound is decarboxylated to form 4'-phosphopantotheine. The sequence is that of Coenzyme A biosynthesis bifunctional protein CoaBC from Methanocaldococcus jannaschii (strain ATCC 43067 / DSM 2661 / JAL-1 / JCM 10045 / NBRC 100440) (Methanococcus jannaschii).